The primary structure comprises 321 residues: 2,3,4,5-tetrahydropyridine-2,6-dicarboxylate N-succinyltransferase (321 aa).

The Mg(2+) site is built by aspartate 166 and glutamate 183. Glutamate 199 functions as the Acyl-anhydride intermediate in the catalytic mechanism. Residues arginine 201, glycine 216, serine 219, alanine 242, 257-258 (EA), glycine 265, lysine 281, and 294-297 (RRNS) contribute to the succinyl-CoA site.

This sequence belongs to the type 2 tetrahydrodipicolinate N-succinyltransferase family. As to quaternary structure, homotrimer.

It is found in the cytoplasm. The catalysed reaction is (S)-2,3,4,5-tetrahydrodipicolinate + succinyl-CoA + H2O = (S)-2-succinylamino-6-oxoheptanedioate + CoA. It functions in the pathway amino-acid biosynthesis; L-lysine biosynthesis via DAP pathway; LL-2,6-diaminopimelate from (S)-tetrahydrodipicolinate (succinylase route): step 1/3. Catalyzes the conversion of the cyclic tetrahydrodipicolinate (THDP) into the acyclic N-succinyl-L-2-amino-6-oxopimelate using succinyl-CoA. This is 2,3,4,5-tetrahydropyridine-2,6-dicarboxylate N-succinyltransferase from Micrococcus luteus (strain ATCC 4698 / DSM 20030 / JCM 1464 / CCM 169 / CCUG 5858 / IAM 1056 / NBRC 3333 / NCIMB 9278 / NCTC 2665 / VKM Ac-2230) (Micrococcus lysodeikticus).